We begin with the raw amino-acid sequence, 336 residues long: Glycerol-3-phosphate dehydrogenase [NAD(P)+] (336 aa).

Serine 11, tryptophan 12, arginine 32, and lysine 106 together coordinate NADPH. Residues lysine 106 and glycine 136 each coordinate sn-glycerol 3-phosphate. Alanine 140 is an NADPH binding site. Residues lysine 191, aspartate 244, serine 254, arginine 255, and asparagine 256 each contribute to the sn-glycerol 3-phosphate site. Lysine 191 functions as the Proton acceptor in the catalytic mechanism. An NADPH-binding site is contributed by arginine 255. NADPH-binding residues include valine 279 and glutamate 281.

Belongs to the NAD-dependent glycerol-3-phosphate dehydrogenase family.

It is found in the cytoplasm. It carries out the reaction sn-glycerol 3-phosphate + NAD(+) = dihydroxyacetone phosphate + NADH + H(+). The catalysed reaction is sn-glycerol 3-phosphate + NADP(+) = dihydroxyacetone phosphate + NADPH + H(+). It participates in membrane lipid metabolism; glycerophospholipid metabolism. Functionally, catalyzes the reduction of the glycolytic intermediate dihydroxyacetone phosphate (DHAP) to sn-glycerol 3-phosphate (G3P), the key precursor for phospholipid synthesis. The polypeptide is Glycerol-3-phosphate dehydrogenase [NAD(P)+] (Frankia casuarinae (strain DSM 45818 / CECT 9043 / HFP020203 / CcI3)).